The chain runs to 225 residues: Orotate phosphoribosyltransferase (225 aa).

Residue lysine 29 coordinates 5-phospho-alpha-D-ribose 1-diphosphate. Residue 37–38 (FF) participates in orotate binding. 5-phospho-alpha-D-ribose 1-diphosphate is bound by residues 75 to 76 (YK), arginine 105, lysine 106, lysine 109, histidine 111, and 130 to 138 (DDVITAGTS). The orotate site is built by threonine 134 and arginine 162.

This sequence belongs to the purine/pyrimidine phosphoribosyltransferase family. PyrE subfamily. Homodimer. Mg(2+) is required as a cofactor.

It catalyses the reaction orotidine 5'-phosphate + diphosphate = orotate + 5-phospho-alpha-D-ribose 1-diphosphate. It participates in pyrimidine metabolism; UMP biosynthesis via de novo pathway; UMP from orotate: step 1/2. Catalyzes the transfer of a ribosyl phosphate group from 5-phosphoribose 1-diphosphate to orotate, leading to the formation of orotidine monophosphate (OMP). This chain is Orotate phosphoribosyltransferase, found in Bordetella petrii (strain ATCC BAA-461 / DSM 12804 / CCUG 43448).